A 149-amino-acid chain; its full sequence is Deoxyuridine 5'-triphosphate nucleotidohydrolase (149 aa).

Substrate-binding positions include 68-70 (RSG), N81, 85-87 (TVD), and K95.

This sequence belongs to the dUTPase family. It depends on Mg(2+) as a cofactor.

The catalysed reaction is dUTP + H2O = dUMP + diphosphate + H(+). It functions in the pathway pyrimidine metabolism; dUMP biosynthesis; dUMP from dCTP (dUTP route): step 2/2. In terms of biological role, this enzyme is involved in nucleotide metabolism: it produces dUMP, the immediate precursor of thymidine nucleotides and it decreases the intracellular concentration of dUTP so that uracil cannot be incorporated into DNA. The protein is Deoxyuridine 5'-triphosphate nucleotidohydrolase of Neorickettsia sennetsu (strain ATCC VR-367 / Miyayama) (Ehrlichia sennetsu).